A 268-amino-acid polypeptide reads, in one-letter code: Small ribosomal subunit protein uS3 (268 aa).

The 69-residue stretch at 38–106 (IRKLLATGME…QVQLNILEVK (69 aa)) folds into the KH type-2 domain. The interval 218-268 (VAAPAGDRPRRERPSRPRRSGATGTTATSTEAGRAATATADAPATTEQKEG) is disordered. The segment covering 237–268 (SGATGTTATSTEAGRAATATADAPATTEQKEG) has biased composition (low complexity).

It belongs to the universal ribosomal protein uS3 family. Part of the 30S ribosomal subunit. Forms a tight complex with proteins S10 and S14.

Binds the lower part of the 30S subunit head. Binds mRNA in the 70S ribosome, positioning it for translation. This chain is Small ribosomal subunit protein uS3, found in Rhodococcus jostii (strain RHA1).